The chain runs to 272 residues: MQHHKATPESPIGIFDSGVGGLTVVRAIQAEMPAERIIYFGDTARVPYGTKSPATIRKYAHEDTAILMSHLPKIIIVACNTVSALALDVVEKTAGSIPVIGVLKAGADLAVQVTRNKHVGVIGTQATVSSNAYADAITLLDANIEVVSKACPLFVPLAEEGFTEHAATRLIASDYLAAFDGHDIDTLVLGCTHYPILRHVITETLHRDIRIIDSAEAVAGRTRKLLADAKLLSTEKHAPPPHLLVSDLPQKFSMLYKLFMESDLPDVELVEV.

Substrate-binding positions include 16-17 (DS) and 48-49 (YG). The active-site Proton donor/acceptor is the Cys79. Position 80–81 (80–81 (NT)) interacts with substrate. The active-site Proton donor/acceptor is the Cys191. 192–193 (TH) lines the substrate pocket.

The protein belongs to the aspartate/glutamate racemases family.

It catalyses the reaction L-glutamate = D-glutamate. Its pathway is cell wall biogenesis; peptidoglycan biosynthesis. Functionally, provides the (R)-glutamate required for cell wall biosynthesis. The chain is Glutamate racemase from Chlorobium phaeobacteroides (strain DSM 266 / SMG 266 / 2430).